The sequence spans 242 residues: Ribosomal RNA large subunit methyltransferase E (242 aa).

5 residues coordinate S-adenosyl-L-methionine: Gly-64, Trp-66, Asp-84, Asp-100, and Asp-125. Lys-165 acts as the Proton acceptor in catalysis. The interval 198–242 (SSETFLLGRGLKKASPNGLDSRSGTAAEPAPLVPIGTNSMPANGD) is disordered. Residues 233–242 (GTNSMPANGD) are compositionally biased toward polar residues.

Belongs to the class I-like SAM-binding methyltransferase superfamily. RNA methyltransferase RlmE family.

Its subcellular location is the cytoplasm. The enzyme catalyses uridine(2552) in 23S rRNA + S-adenosyl-L-methionine = 2'-O-methyluridine(2552) in 23S rRNA + S-adenosyl-L-homocysteine + H(+). Specifically methylates the uridine in position 2552 of 23S rRNA at the 2'-O position of the ribose in the fully assembled 50S ribosomal subunit. This is Ribosomal RNA large subunit methyltransferase E from Verminephrobacter eiseniae (strain EF01-2).